We begin with the raw amino-acid sequence, 112 residues long: UPF0212 protein Mhun_0078 (112 aa).

The protein belongs to the UPF0212 family.

The sequence is that of UPF0212 protein Mhun_0078 from Methanospirillum hungatei JF-1 (strain ATCC 27890 / DSM 864 / NBRC 100397 / JF-1).